The sequence spans 327 residues: Zinc transport protein ZntB (327 aa).

The Cytoplasmic portion of the chain corresponds to 1 to 271 (MDVVEGKALQ…AMNRRTYTMS (271 aa)). A helical membrane pass occupies residues 272–292 (LLAMVFLPTTFLTGLFGVNLG). Residues 293–300 (GIPGNTDA) are Periplasmic-facing. Residues 301–321 (FGFTIFCMMLVVLVLSVAWWL) traverse the membrane as a helical segment. Topologically, residues 322-327 (KRSKWL) are cytoplasmic.

This sequence belongs to the CorA metal ion transporter (MIT) (TC 1.A.35) family.

The protein resides in the cell inner membrane. It catalyses the reaction Zn(2+)(out) + H(+)(out) = Zn(2+)(in) + H(+)(in). Zinc transporter. Acts as a Zn(2+):proton symporter, which likely mediates zinc ion uptake. The protein is Zinc transport protein ZntB of Yersinia pseudotuberculosis serotype O:1b (strain IP 31758).